The primary structure comprises 102 residues: Small ribosomal subunit protein uS10 (102 aa).

This sequence belongs to the universal ribosomal protein uS10 family. As to quaternary structure, part of the 30S ribosomal subunit.

Its function is as follows. Involved in the binding of tRNA to the ribosomes. The protein is Small ribosomal subunit protein uS10 of Arthrobacter sp. (strain FB24).